The primary structure comprises 448 residues: C4-dicarboxylate transport protein (448 aa).

7 consecutive transmembrane segments (helical) span residues 22 to 42 (FQVVVAIVLGALLGHFEPAFA), 55 to 75 (LVKMIIAPVIFLTIVTGIAGM), 90 to 110 (TYFLFFSTLALIVGMVVAHVV), 137 to 157 (ELSLVGFLMDIIPATLISAFV), 159 to 179 (GNILQVLFVAVLFGIALALVG), 199 to 219 (LVHMLMKAAPIGAFGAIAFTI), and 232 to 252 (WLVGSFYLTSLFFVLVILGIV). Positions 428–448 (RAPPLQAPVPPPDAVAPVSAR) are disordered. The segment covering 432–441 (LQAPVPPPDA) has biased composition (pro residues).

This sequence belongs to the dicarboxylate/amino acid:cation symporter (DAACS) (TC 2.A.23) family.

It is found in the cell inner membrane. Functionally, responsible for the transport of dicarboxylates such as succinate, fumarate, and malate from the periplasm across the membrane. This Xanthomonas campestris pv. campestris (strain 8004) protein is C4-dicarboxylate transport protein.